The following is a 243-amino-acid chain: uncharacterized protein (243 aa).

This is an uncharacterized protein from Acidianus bottle-shaped virus (isolate Italy/Pozzuoli) (ABV).